The chain runs to 476 residues: Probable cytosolic Fe-S cluster assembly factor GH10760 (476 aa).

[4Fe-4S] cluster contacts are provided by Cys-23, Cys-68, Cys-71, Cys-74, Cys-187, Cys-243, Cys-395, and Cys-399.

Belongs to the NARF family.

Component of the cytosolic iron-sulfur (Fe/S) protein assembly machinery. Required for maturation of extramitochondrial Fe/S proteins. The protein is Probable cytosolic Fe-S cluster assembly factor GH10760 of Drosophila grimshawi (Hawaiian fruit fly).